The chain runs to 181 residues: Cytochrome c oxidase subunit 2 (181 aa).

Residues C126, E128, C130, H134, and M137 each coordinate Cu cation. E128 serves as a coordination point for Mg(2+).

The protein belongs to the cytochrome c oxidase subunit 2 family. Component of the cytochrome c oxidase (complex IV, CIV), a multisubunit enzyme composed of a catalytic core of 3 subunits and several supernumerary subunits. The complex exists as a monomer or a dimer and forms supercomplexes (SCs) in the inner mitochondrial membrane with ubiquinol-cytochrome c oxidoreductase (cytochrome b-c1 complex, complex III, CIII). Cu cation serves as cofactor.

The protein localises to the mitochondrion inner membrane. It catalyses the reaction 4 Fe(II)-[cytochrome c] + O2 + 8 H(+)(in) = 4 Fe(III)-[cytochrome c] + 2 H2O + 4 H(+)(out). In terms of biological role, component of the cytochrome c oxidase, the last enzyme in the mitochondrial electron transport chain which drives oxidative phosphorylation. The respiratory chain contains 3 multisubunit complexes succinate dehydrogenase (complex II, CII), ubiquinol-cytochrome c oxidoreductase (cytochrome b-c1 complex, complex III, CIII) and cytochrome c oxidase (complex IV, CIV), that cooperate to transfer electrons derived from NADH and succinate to molecular oxygen, creating an electrochemical gradient over the inner membrane that drives transmembrane transport and the ATP synthase. Cytochrome c oxidase is the component of the respiratory chain that catalyzes the reduction of oxygen to water. Electrons originating from reduced cytochrome c in the intermembrane space (IMS) are transferred via the dinuclear copper A center (CU(A)) of subunit 2 and heme A of subunit 1 to the active site in subunit 1, a binuclear center (BNC) formed by heme A3 and copper B (CU(B)). The BNC reduces molecular oxygen to 2 water molecules using 4 electrons from cytochrome c in the IMS and 4 protons from the mitochondrial matrix. In Paramecium primaurelia, this protein is Cytochrome c oxidase subunit 2 (COII).